We begin with the raw amino-acid sequence, 407 residues long: M protein, serotype 2.1 (407 aa).

The first 41 residues, 1-41, serve as a signal peptide directing secretion; it reads MARKDTNKQYSLRKLKTGTASVAVAVAVLGAGFANQTTVKA. The tract at residues 81-94 is 2 X 7 AA tandem repeats; it reads VEEEHKKVEEEHKK. Basic and acidic residues-rich tracts occupy residues 83–144, 152–229, 237–264, and 272–288; these read EEHK…KRYQ, QLEK…EKQI, LSRD…EKQI, and LSRD…KVEA. The segment at 83–289 is disordered; sequence EEHKKVEEEH…REAKKKVEAD (207 aa). C repeat units lie at residues 151–185, 186–220, 221–255, and 256–290; these read QQLE…EAEH, QKLK…EAEH, and QKLK…EADL. 4 D repeats span residues 323 to 328, 329 to 334, 337 to 342, and 344 to 349; these read AKLEAE, AKALKE, AKQAEE, and AKLKGN. Residues 344–382 are disordered; that stretch reads AKLKGNQTPNAKVAPQANRSRSAMTQQKRTLPSTGETAN. The span at 360-380 shows a compositional bias: polar residues; sequence ANRSRSAMTQQKRTLPSTGET. An LPXTG sorting signal motif is present at residues 374–378; the sequence is LPSTG. The residue at position 377 (T377) is a Pentaglycyl murein peptidoglycan amidated threonine. Residues 378–407 constitute a propeptide, removed by sortase; that stretch reads GETANPFFTAAAATVMVSAGMLALKRKEEN.

It belongs to the M protein family.

It is found in the secreted. The protein localises to the cell wall. In terms of biological role, this protein is one of the different antigenic serotypes of protein M. Protein M is closely associated with virulence of the bacterium and can render the organism resistant to phagocytosis. The sequence is that of M protein, serotype 2.1 (emmL2.1) from Streptococcus pyogenes.